Consider the following 274-residue polypeptide: Mitochondrial S-adenosylmethionine carrier protein (274 aa).

Solcar repeat units lie at residues 4–77 (PGFV…VKWF), 86–168 (LTPM…LKAL), and 177–265 (VDSW…THSL). The next 6 membrane-spanning stretches (helical) occupy residues 5–25 (GFVAALVAGGVAGVSVDLILF), 49–69 (IYAGVPSAAIGSFPNAAAFFI), 85–105 (YLTPMKHMLAASAGEVVACLI), 142–162 (RGYKSTVLREIPFSLVQFPLW), 182–202 (SAVCGAFAGGFAAAVTTPLDV), and 238–258 (FAGVFPRMAAISLGGFIFLGA).

Belongs to the mitochondrial carrier (TC 2.A.29) family. Widely expressed. Highly expressed in testis, with moderate expression in brain, heart, kidney, lung, skeletal muscle, pancreas, small intestine and liver, and low expression in spleen.

It is found in the mitochondrion inner membrane. It carries out the reaction S-adenosyl-L-homocysteine(out) + S-adenosyl-L-methionine(in) = S-adenosyl-L-homocysteine(in) + S-adenosyl-L-methionine(out). Strongly inhibited by tannic acid and Bromocresol Purple. Mitochondrial S-adenosyl-L-methionine/S-adenosyl-L-homocysteine antiporter. Mediates the exchange of cytosolic S-adenosyl-L-methionine, the predominant methyl-group donor for macromolecule methylation processes, for mitochondrial S-adenosylhomocysteine(SAH), a by-product of methylation reactions. This chain is Mitochondrial S-adenosylmethionine carrier protein, found in Homo sapiens (Human).